The chain runs to 77 residues: Acyl carrier protein (77 aa).

In terms of domain architecture, Carrier spans 2–77 (ADVLERVTKI…DAVTYIESHL (76 aa)). Ser-37 is subject to O-(pantetheine 4'-phosphoryl)serine.

This sequence belongs to the acyl carrier protein (ACP) family. 4'-phosphopantetheine is transferred from CoA to a specific serine of apo-ACP by AcpS. This modification is essential for activity because fatty acids are bound in thioester linkage to the sulfhydryl of the prosthetic group.

It is found in the cytoplasm. The protein operates within lipid metabolism; fatty acid biosynthesis. Carrier of the growing fatty acid chain in fatty acid biosynthesis. The chain is Acyl carrier protein from Bacillus mycoides (strain KBAB4) (Bacillus weihenstephanensis).